The following is a 143-amino-acid chain: Transcriptional regulator MraZ (143 aa).

2 SpoVT-AbrB domains span residues Glu-5–Glu-47 and Ala-76–Thr-119.

This sequence belongs to the MraZ family. Forms oligomers.

It localises to the cytoplasm. The protein localises to the nucleoid. This Staphylococcus haemolyticus (strain JCSC1435) protein is Transcriptional regulator MraZ.